We begin with the raw amino-acid sequence, 133 residues long: Transmembrane protein 60 (133 aa).

The next 4 membrane-spanning stretches (helical) occupy residues 5 to 25, 35 to 55, 78 to 98, and 110 to 130; these read LAQR…MLVL, WFLI…MLIV, AWYL…CAKL, and FIPL…NVFF.

Its subcellular location is the membrane. The protein is Transmembrane protein 60 (Tmem60) of Mus musculus (Mouse).